Here is a 156-residue protein sequence, read N- to C-terminus: Arginine repressor (156 aa).

The protein belongs to the ArgR family.

Its subcellular location is the cytoplasm. Its pathway is amino-acid biosynthesis; L-arginine biosynthesis [regulation]. Its function is as follows. Regulates arginine biosynthesis genes. This is Arginine repressor from Shewanella frigidimarina (strain NCIMB 400).